The primary structure comprises 330 residues: Inactive serine protease 45 (330 aa).

The signal sequence occupies residues 1-35; the sequence is MATSLRLLDAGPGSLRRWIPTCFAALLLLPPRPNL. The 247-residue stretch at 45 to 291 folds into the Peptidase S1 domain; it reads VCGAPWWSDS…YTGWIKEQVS (247 aa). Cystine bridges form between cysteine 75-cysteine 91, cysteine 172-cysteine 249, cysteine 207-cysteine 230, and cysteine 239-cysteine 267. Asparagine 272 is a glycosylation site (N-linked (GlcNAc...) asparagine).

This sequence belongs to the peptidase S1 family.

The protein resides in the secreted. The protein is Inactive serine protease 45 (Prss45) of Rattus norvegicus (Rat).